The sequence spans 340 residues: Glycerol-3-phosphate dehydrogenase [NAD(P)+] (340 aa).

The NADPH site is built by Ser14, Phe15, Arg35, and Lys108. Sn-glycerol 3-phosphate-binding residues include Lys108 and Gly136. Ala140 is an NADPH binding site. Sn-glycerol 3-phosphate-binding residues include Lys191, Asp244, Ser254, Arg255, and Asn256. Lys191 functions as the Proton acceptor in the catalytic mechanism. Arg255 is an NADPH binding site. Residue Glu281 participates in NADPH binding.

This sequence belongs to the NAD-dependent glycerol-3-phosphate dehydrogenase family.

Its subcellular location is the cytoplasm. The enzyme catalyses sn-glycerol 3-phosphate + NAD(+) = dihydroxyacetone phosphate + NADH + H(+). The catalysed reaction is sn-glycerol 3-phosphate + NADP(+) = dihydroxyacetone phosphate + NADPH + H(+). Its pathway is membrane lipid metabolism; glycerophospholipid metabolism. Catalyzes the reduction of the glycolytic intermediate dihydroxyacetone phosphate (DHAP) to sn-glycerol 3-phosphate (G3P), the key precursor for phospholipid synthesis. The protein is Glycerol-3-phosphate dehydrogenase [NAD(P)+] of Pseudomonas paraeruginosa (strain DSM 24068 / PA7) (Pseudomonas aeruginosa (strain PA7)).